A 273-amino-acid polypeptide reads, in one-letter code: 4-hydroxy-tetrahydrodipicolinate reductase (273 aa).

Residues 12 to 17 (GAGGRM) and E38 each bind NAD(+). Residue R39 participates in NADP(+) binding. NAD(+) contacts are provided by residues 102 to 104 (GTT) and 126 to 129 (AANF). Residue H159 is the Proton donor/acceptor of the active site. Residue H160 participates in (S)-2,3,4,5-tetrahydrodipicolinate binding. K163 (proton donor) is an active-site residue. Residue 169 to 170 (GT) participates in (S)-2,3,4,5-tetrahydrodipicolinate binding.

The protein belongs to the DapB family. As to quaternary structure, homotetramer.

It localises to the cytoplasm. It carries out the reaction (S)-2,3,4,5-tetrahydrodipicolinate + NAD(+) + H2O = (2S,4S)-4-hydroxy-2,3,4,5-tetrahydrodipicolinate + NADH + H(+). The enzyme catalyses (S)-2,3,4,5-tetrahydrodipicolinate + NADP(+) + H2O = (2S,4S)-4-hydroxy-2,3,4,5-tetrahydrodipicolinate + NADPH + H(+). The protein operates within amino-acid biosynthesis; L-lysine biosynthesis via DAP pathway; (S)-tetrahydrodipicolinate from L-aspartate: step 4/4. In terms of biological role, catalyzes the conversion of 4-hydroxy-tetrahydrodipicolinate (HTPA) to tetrahydrodipicolinate. This is 4-hydroxy-tetrahydrodipicolinate reductase from Pectobacterium carotovorum subsp. carotovorum (strain PC1).